The following is a 441-amino-acid chain: tRNA (guanine(37)-N(1))-methyltransferase (441 aa).

The transit peptide at 1–9 directs the protein to the mitochondrion; sequence MFAPPAARA. Residues R221, 248–249, 276–277, and N331 each bind S-adenosyl-L-methionine; these read DL and DG.

It belongs to the class I-like SAM-binding methyltransferase superfamily. TRM5/TYW2 family. In terms of assembly, monomer.

It is found in the mitochondrion matrix. The protein resides in the nucleus. It localises to the cytoplasm. It carries out the reaction guanosine(37) in tRNA + S-adenosyl-L-methionine = N(1)-methylguanosine(37) in tRNA + S-adenosyl-L-homocysteine + H(+). Its function is as follows. Specifically methylates the N1 position of guanosine-37 in various cytoplasmic and mitochondrial tRNAs. Methylation is not dependent on the nature of the nucleoside 5' of the target nucleoside. This is the first step in the biosynthesis of wybutosine (yW), a modified base adjacent to the anticodon of tRNAs and required for accurate decoding. The chain is tRNA (guanine(37)-N(1))-methyltransferase from Phaeosphaeria nodorum (strain SN15 / ATCC MYA-4574 / FGSC 10173) (Glume blotch fungus).